The chain runs to 933 residues: Thyroid peroxidase (933 aa).

An N-terminal signal peptide occupies residues 1–18 (MRALAVLSVTLVMACTEA). The Extracellular segment spans residues 19 to 846 (FFPFISRGKE…TCVDSGRLPR (828 aa)). N-linked (GlcNAc...) asparagine glycosylation is present at Asn129. Cys142 and Cys158 form a disulfide bridge. Asp238 lines the heme b pocket. His239 serves as the catalytic Proton acceptor. Asp240 serves as a coordination point for Ca(2+). 2 disulfides stabilise this stretch: Cys259–Cys269 and Cys263–Cys286. The N-linked (GlcNAc...) asparagine glycan is linked to Asn307. Thr321, Phe323, Asp325, and Ser327 together coordinate Ca(2+). Asn342 is a glycosylation site (N-linked (GlcNAc...) asparagine). Glu399 and His494 together coordinate heme b. The N-linked (GlcNAc...) asparagine glycan is linked to Asn569. 2 disulfide bridges follow: Cys598–Cys655 and Cys696–Cys721. The Sushi domain occupies 740–795 (DKCGFPESVENGDFVHCEESGRRVLVYSCRHGYELQGREQLTCTQEGWDFQPPLCK). Residues 796–839 (DVNECADGAHPPCHASARCRNTKGGFQCLCADPYELGDDGRTCV) form the EGF-like; calcium-binding domain. Disulfide bonds link Cys800-Cys814, Cys808-Cys823, and Cys825-Cys838. The helical transmembrane segment at 847-871 (VTWISMSLAALLIGGFAGLTSTVIC) threads the bilayer. Over 872–933 (RWTRTGTKST…RDTHRLPRAL (62 aa)) the chain is Cytoplasmic. The interval 881 to 933 (TLPISETGGGTPELRCGKHQAVGTSPQRAAAQDSEQESAGMEGRDTHRLPRAL) is disordered. A compositionally biased stretch (basic and acidic residues) spans 922-933 (EGRDTHRLPRAL).

This sequence belongs to the peroxidase family. XPO subfamily. Interacts with DUOX1, DUOX2 and CYBA. It depends on Ca(2+) as a cofactor. Requires heme b as cofactor. Post-translationally, glycosylated. Heme is covalently bound through a H(2)O(2)-dependent autocatalytic process. Heme insertion is important for the delivery of protein at the cell surface. In terms of processing, cleaved in its N-terminal part.

The protein localises to the membrane. Its subcellular location is the cell surface. It carries out the reaction 2 iodide + H2O2 + 2 H(+) = diiodine + 2 H2O. It catalyses the reaction [thyroglobulin]-L-tyrosine + iodide + H2O2 + H(+) = [thyroglobulin]-3-iodo-L-tyrosine + 2 H2O. The catalysed reaction is [thyroglobulin]-3-iodo-L-tyrosine + iodide + H2O2 + H(+) = [thyroglobulin]-3,5-diiodo-L-tyrosine + 2 H2O. The enzyme catalyses 2 [thyroglobulin]-3,5-diiodo-L-tyrosine + H2O2 = [thyroglobulin]-L-thyroxine + [thyroglobulin]-dehydroalanine + 2 H2O. It carries out the reaction [thyroglobulin]-3-iodo-L-tyrosine + [thyroglobulin]-3,5-diiodo-L-tyrosine + H2O2 = [thyroglobulin]-3,3',5-triiodo-L-thyronine + [thyroglobulin]-dehydroalanine + 2 H2O. It participates in hormone biosynthesis; thyroid hormone biosynthesis. Iodination and coupling of the hormonogenic tyrosines in thyroglobulin to yield the thyroid hormones T(3) and T(4). The polypeptide is Thyroid peroxidase (Homo sapiens (Human)).